A 505-amino-acid chain; its full sequence is Lysine--tRNA ligase (505 aa).

Positions 415 and 422 each coordinate Mg(2+).

It belongs to the class-II aminoacyl-tRNA synthetase family. In terms of assembly, homodimer. Mg(2+) is required as a cofactor.

It is found in the cytoplasm. It catalyses the reaction tRNA(Lys) + L-lysine + ATP = L-lysyl-tRNA(Lys) + AMP + diphosphate. In Cronobacter sakazakii (strain ATCC BAA-894) (Enterobacter sakazakii), this protein is Lysine--tRNA ligase.